Consider the following 550-residue polypeptide: Retron Ec78 probable ATPase (550 aa).

Residues 93–100 (GNNGKGKT) carry the ATP-binding motif.

In terms of biological role, probable ATPase component of antiviral defense system retron Ec78, composed of a non-coding RNA (ncRNA), a reverse transcriptase (RT), this protein and a putative HNH endonuclease. Expression of retron Ec78 confers protection against bacteriophage T5. At multiplicity of infection (MOI) of 0.02 cultures slow growth when infected with T5 but do not collapse, at MOI 2 cultures enter growth stasis. The chain is Retron Ec78 probable ATPase from Escherichia coli.